The following is a 268-amino-acid chain: MNTKEISKVVDLVRESNPLVHNITNVVVTNFTANGLLALGASPVMAYAKEEVAEMASIAGALVLNMGTLRPDEVEAMLLAGKSANRNDVPVLFDPVGAGATSYRTEVARHIPAEIELAIIRGNAAEIANVINEKWEIKGVDAGAGNGNVVSIAKQAADELNTVAVITGKEDVVTDGERTIVIRNGHSILTKITGTGCLLTSVIGAFVAVEKDYVKAAVAALTFYGVAAELAAAKTVEKGPGSFQIEFLNQLANTTSGDIEKYGKIEVI.

A substrate-binding site is contributed by Met45. Residues Arg121 and Thr167 each coordinate ATP. Gly194 provides a ligand contact to substrate.

It belongs to the Thz kinase family. It depends on Mg(2+) as a cofactor.

It catalyses the reaction 5-(2-hydroxyethyl)-4-methylthiazole + ATP = 4-methyl-5-(2-phosphooxyethyl)-thiazole + ADP + H(+). It participates in cofactor biosynthesis; thiamine diphosphate biosynthesis; 4-methyl-5-(2-phosphoethyl)-thiazole from 5-(2-hydroxyethyl)-4-methylthiazole: step 1/1. In terms of biological role, catalyzes the phosphorylation of the hydroxyl group of 4-methyl-5-beta-hydroxyethylthiazole (THZ). The sequence is that of Hydroxyethylthiazole kinase from Bacillus anthracis (strain A0248).